The primary structure comprises 228 residues: UPF0758 protein stu1465 (228 aa).

The MPN domain occupies 103 to 225; the sequence is QIMSSQQVAR…YYSFREERED (123 aa). Zn(2+) is bound by residues histidine 174, histidine 176, and aspartate 187. The JAMM motif signature appears at 174–187; it reads HNHPSGEAYPSRND.

Belongs to the UPF0758 family.

The sequence is that of UPF0758 protein stu1465 from Streptococcus thermophilus (strain ATCC BAA-250 / LMG 18311).